The chain runs to 205 residues: MATYAAFKHVELYNVGKAKKRVLRAPGGVSSDIFGADMPQTPRNVKNLMASNIFSAEKDVAQKNNVRQGAHRFYFMGDVPRRGQKPVDSYSRLFGEPTRPFTPGKNHMKSNILNVGQNSNTAQLISNSKGNYNGKSGSVSSASSSVSSSTENLKINGGIRSEGNPVTGEGYKPGATDYIQPANNGSSQVINKNRVPPGGYSSGLW.

Ser-30 is subject to Phosphoserine. Thr-41, Thr-98, and Thr-102 each carry phosphothreonine. Over residues 124 to 135 (LISNSKGNYNGK) the composition is skewed to polar residues. Positions 124–205 (LISNSKGNYN…PPGGYSSGLW (82 aa)) are disordered. The span at 136–149 (SGSVSSASSSVSSS) shows a compositional bias: low complexity. Ser-138 and Ser-149 each carry phosphoserine. Residues 181–191 (PANNGSSQVIN) show a composition bias toward polar residues.

This sequence belongs to the MAP Jupiter family.

The protein resides in the nucleus. It is found in the cytoplasm. Its subcellular location is the cytoskeleton. The protein localises to the spindle. Binds to all microtubule populations. This chain is Microtubule-associated protein Jupiter, found in Drosophila virilis (Fruit fly).